Reading from the N-terminus, the 382-residue chain is Putative 12-oxophytodienoate reductase 3 (382 aa).

FMN contacts are provided by residues 37–39 (PLT), alanine 70, and glutamine 112. A compositionally biased stretch (polar residues) spans 120–138 (STNDQQPNGQAPISSTDKQ). A disordered region spans residues 120–147 (STNDQQPNGQAPISSTDKQITPDDSHTV). 184–187 (HGAH) lines the substrate pocket. Tyrosine 189 serves as the catalytic Proton donor. Position 236 (arginine 236) interacts with FMN. Substrate is bound at residue arginine 277. Residues glycine 307 and 328–329 (GR) contribute to the FMN site.

This sequence belongs to the NADH:flavin oxidoreductase/NADH oxidase family. FMN serves as cofactor.

Its function is as follows. Putative oxophytodienoate reductase that may be involved in the biosynthesis or metabolism of oxylipin signaling molecules. The sequence is that of Putative 12-oxophytodienoate reductase 3 (OPR3) from Oryza sativa subsp. japonica (Rice).